The sequence spans 568 residues: Potassium-transporting ATPase potassium-binding subunit (568 aa).

10 consecutive transmembrane segments (helical) span residues 7–27, 65–85, 135–155, 177–197, 254–274, 286–306, 383–403, 422–442, 489–509, and 530–550; these read AEIA…GLFL, SYAL…YAIL, AGLT…AAAV, VSLY…VALG, LTNL…VVAF, ALIT…YWTE, GLYG…LMVG, MLAV…AAVL, LGIA…AIAG, and LFIG…FFPA.

It belongs to the KdpA family. In terms of assembly, the system is composed of three essential subunits: KdpA, KdpB and KdpC.

It localises to the cell inner membrane. In terms of biological role, part of the high-affinity ATP-driven potassium transport (or Kdp) system, which catalyzes the hydrolysis of ATP coupled with the electrogenic transport of potassium into the cytoplasm. This subunit binds the periplasmic potassium ions and delivers the ions to the membrane domain of KdpB through an intramembrane tunnel. The sequence is that of Potassium-transporting ATPase potassium-binding subunit from Beijerinckia indica subsp. indica (strain ATCC 9039 / DSM 1715 / NCIMB 8712).